Reading from the N-terminus, the 382-residue chain is Inactive anthranilate O-methyltransferase 1 (382 aa).

S-adenosyl-L-homocysteine is bound by residues Tyr-20, Cys-61, Asn-66, Asp-102, Leu-103, Ser-146, and Tyr-147. Residues Glu-268 and Phe-270 each coordinate Mg(2+).

Belongs to the methyltransferase superfamily. Type-7 methyltransferase family. SABATH subfamily.

The chain is Inactive anthranilate O-methyltransferase 1 (AAMT1I) from Zea mays (Maize).